Consider the following 723-residue polypeptide: BTB/POZ domain-containing protein 18 (723 aa).

The BTB domain occupies 34 to 102; it reads CDALLQAEGE…LYTSEMEVSQ (69 aa). Disordered regions lie at residues 150 to 176, 188 to 350, and 370 to 394; these read APIS…PSPL, EGAH…EEGQ, and EPPL…PSGT. Polar residues-rich tracts occupy residues 162–174 and 195–205; these read RPQT…QTPS and NLPNADSLSDT. Low complexity-rich tracts occupy residues 217–227 and 271–286; these read QESRSSPSSQR and TSTP…SMPT. 2 stretches are compositionally biased toward basic and acidic residues: residues 303–312 and 327–336; these read QGVDKQKPGE and KPAENKKQSP. Phosphoserine is present on Ser414. The tract at residues 603–637 is disordered; sequence TPDLEITSSQPLDGQGEKLLHFDSSDPSQRSYNHL. Basic and acidic residues predominate over residues 617–626; that stretch reads QGEKLLHFDS. Over residues 627 to 636 the composition is skewed to polar residues; that stretch reads SDPSQRSYNH. Phosphoserine is present on residues Ser682 and Ser683. A disordered region spans residues 699 to 723; that stretch reads LGPTSVPSVWPDPSSESETEVDILT. The segment covering 713 to 723 has biased composition (acidic residues); it reads SESETEVDILT.

In terms of tissue distribution, expressed in testis.

The protein resides in the nucleus. Specifically required during spermatogenesis to promote expression of piRNA precursors. The piRNA metabolic process mediates the repression of transposable elements during meiosis by forming complexes composed of piRNAs and Piwi proteins and governs the methylation and subsequent repression of transposons, which is essential for the germline integrity. Acts by facilitating transcription elongation at piRNA loci during pachytene. This chain is BTB/POZ domain-containing protein 18, found in Mus musculus (Mouse).